Reading from the N-terminus, the 311-residue chain is Protein lifeguard 3 (311 aa).

2 disordered regions span residues 1-37 (MSNP…GGYP) and 50-72 (PAGY…PGHG). Over residues 53-62 (YPQPMPPTHP) the composition is skewed to pro residues. Ser81 and Ser83 each carry phosphoserine. 7 consecutive transmembrane segments (helical) span residues 110-130 (LLIT…SAFV), 134-154 (VAVY…LACC), 165-185 (IILL…ISSM), 190-210 (AVII…IFCF), 221-241 (GLFC…SIVL), 246-266 (VYWL…LFLA), and 286-306 (ITGA…VLQL).

Belongs to the BI1 family. LFG subfamily.

The protein localises to the membrane. It localises to the lysosome membrane. It is found in the endosome membrane. Its function is as follows. Negatively regulates aortic matrix metalloproteinase-9 (MMP9) production and may play a protective role in vascular remodeling. The protein is Protein lifeguard 3 (TMBIM1) of Homo sapiens (Human).